A 604-amino-acid chain; its full sequence is Glutamine--fructose-6-phosphate aminotransferase [isomerizing] (604 aa).

The active-site Nucleophile; for GATase activity is Cys-2. Positions 2 to 218 constitute a Glutamine amidotransferase type-2 domain; that stretch reads CGIVGVVGNT…DKELVIVKKD (217 aa). 2 consecutive SIS domains span residues 284 to 423 and 456 to 594; these read IIKS…ANGK and VEQL…VDKP. Residue Lys-599 is the For Fru-6P isomerization activity of the active site.

In terms of assembly, homodimer.

The protein resides in the cytoplasm. The enzyme catalyses D-fructose 6-phosphate + L-glutamine = D-glucosamine 6-phosphate + L-glutamate. Its function is as follows. Catalyzes the first step in hexosamine metabolism, converting fructose-6P into glucosamine-6P using glutamine as a nitrogen source. This Streptococcus agalactiae serotype V (strain ATCC BAA-611 / 2603 V/R) protein is Glutamine--fructose-6-phosphate aminotransferase [isomerizing].